The sequence spans 432 residues: Alcohol acyltransferase 9 (432 aa).

Catalysis depends on proton acceptor residues His156 and Asp379.

Belongs to the plant acyltransferase family.

The catalysed reaction is 2-(methylsulfanyl)acetyl-CoA + butan-1-ol = butyl 2-(methylsulfanyl)acetate + CoA. It catalyses the reaction ethanol + acetyl-CoA = ethyl acetate + CoA. It carries out the reaction butan-1-ol + acetyl-CoA = butyl acetate + CoA. The enzyme catalyses butan-1-ol + propanoyl-CoA = butyl propanoate + CoA. Its function is as follows. Involved in the biosynthesis of volatile esters which confer kiwifruit flavor. Alcohol acyl transferase that can use a wide range of alcohols as substrate to produce esters. Exhibits acetyl-CoA:alcohol O-acyltransferase activity. The sequence is that of Alcohol acyltransferase 9 from Actinidia chinensis var. chinensis (Chinese soft-hair kiwi).